Here is a 696-residue protein sequence, read N- to C-terminus: Verrucotoxin subunit beta (696 aa).

Positions 506–696 (HMPGVETIKD…GCTTESQWSN (191 aa)) constitute a B30.2/SPRY domain.

The protein belongs to the SNTX/VTX toxin family. As to quaternary structure, tetramer composed of 2 alpha and 2 beta subunits. In terms of processing, glycosylated. Expressed by the venom gland.

The protein resides in the secreted. Its function is as follows. This lethal (towards mice) toxin induces hemolytic, cytolytic and hypotensive activities. Inhibits calcium channels and may activate ATP-sensitive potassium channels in frog atrial heart muscle. In guinea-pig ventricular myocytes, it modulates calcium channel activity through the beta-adrenoceptor-cAMP-PKA pathway (ADRB). This Synanceia verrucosa (Reef stonefish) protein is Verrucotoxin subunit beta.